The primary structure comprises 105 residues: Small ribosomal subunit protein eS24 (105 aa).

A disordered region spans residues 86–105 (LERNKIEADEEADEEAAEEA). Residues 93–105 (ADEEADEEAAEEA) show a composition bias toward acidic residues.

This sequence belongs to the eukaryotic ribosomal protein eS24 family.

This chain is Small ribosomal subunit protein eS24, found in Natronomonas pharaonis (strain ATCC 35678 / DSM 2160 / CIP 103997 / JCM 8858 / NBRC 14720 / NCIMB 2260 / Gabara) (Halobacterium pharaonis).